The chain runs to 514 residues: Calcium-binding mitochondrial carrier protein SCaMC-2 (514 aa).

Residues 1–234 (MARPRSLVSP…EKQTGMWWRH (234 aa)) lie on the Mitochondrial intermembrane side of the membrane. 4 EF-hand domains span residues 56–91 (EHER…LGVH), 92–122 (RTEL…HYLR), 123–158 (DHEK…LGVN), and 159–194 (ISEQ…HSAE). D69, N71, D73, D80, D105, D107, D109, Q111, and E116 together coordinate Ca(2+). Solcar repeat units lie at residues 229–315 (GMWW…IKRI), 323–408 (LGIH…LKNA), and 420–508 (PGVF…LKLT). A helical transmembrane segment spans residues 235–252 (LVAGGGAGAVSRTCTAPL). Over 253–289 (DRLKVLMQVHASRSNNMSILGGFTHMIREGGFRSLWR) the chain is Mitochondrial matrix. A helical membrane pass occupies residues 290–309 (GNGINVIKIAPESAIKFMAY). Topologically, residues 310–332 (EQIKRIIGSNQETLGIHERFVAG) are mitochondrial intermembrane. The helical transmembrane segment at 333 to 346 (SLAGVIAQSSIYPM) threads the bilayer. Residues 347–382 (EVLKTRMALRKTGQYQGVLDCGKKILLQEGLSAFYK) are Mitochondrial matrix-facing. A helical membrane pass occupies residues 383–402 (GYVPNMLGIIPYAGIDLAVY). The Mitochondrial intermembrane segment spans residues 403–425 (ETLKNAWLQRYATSSADPGVFVL). A helical transmembrane segment spans residues 426-443 (LACGTVSSTCGQLASYPL). Over 444-482 (ALVRTRMQAEASVEGAPQMTMSKLFKHIVKTEGAFGLYR) the chain is Mitochondrial matrix. The chain crosses the membrane as a helical span at residues 483–502 (GLAPNFMKVIPAVSISYVVY). Topologically, residues 503 to 514 (ENLKLTLGVQSR) are mitochondrial intermembrane.

It belongs to the mitochondrial carrier (TC 2.A.29) family.

The protein localises to the mitochondrion inner membrane. Functionally, calcium-dependent mitochondrial solute carrier. This chain is Calcium-binding mitochondrial carrier protein SCaMC-2 (slc25a25), found in Xenopus laevis (African clawed frog).